A 62-amino-acid chain; its full sequence is UPF0434 protein R03186 (62 aa).

It belongs to the UPF0434 family.

The protein is UPF0434 protein R03186 of Rhizobium meliloti (strain 1021) (Ensifer meliloti).